The following is a 168-amino-acid chain: Large ribosomal subunit protein uL10 (168 aa).

It belongs to the universal ribosomal protein uL10 family. In terms of assembly, part of the ribosomal stalk of the 50S ribosomal subunit. The N-terminus interacts with L11 and the large rRNA to form the base of the stalk. The C-terminus forms an elongated spine to which L12 dimers bind in a sequential fashion forming a multimeric L10(L12)X complex.

Its function is as follows. Forms part of the ribosomal stalk, playing a central role in the interaction of the ribosome with GTP-bound translation factors. This chain is Large ribosomal subunit protein uL10, found in Photorhabdus laumondii subsp. laumondii (strain DSM 15139 / CIP 105565 / TT01) (Photorhabdus luminescens subsp. laumondii).